The following is a 161-amino-acid chain: Ubiquitin D (161 aa).

Ubiquitin-like domains follow at residues 3–77 (SCVC…LKVV) and 86–159 (LSLV…AHCI).

The protein belongs to the ubiquitin D family. In terms of assembly, interacts directly with the 26S proteasome. Interacts with NUB1; this interaction facilitates the linking of UBD-conjugated target protein to the proteasome complex and accelerates its own degradation and that of its conjugates. Interacts (via ubiquitin-like 1 domain) with the spindle checkpoint protein MAD2L1 during mitosis. Present in aggresomes of proteasome inhibited cells. Interacts with HDAC6 under proteasome impairment conditions. Forms a thioester with UBA6 in cells stimulated with tumor necrosis factor-alpha (TNFa) and interferon-gamma (IFNg). Interacts with SQSTM1 and TP53/p53. Post-translationally, can be acetylated.

The protein localises to the nucleus. Its subcellular location is the cytoplasm. Ubiquitin-like protein modifier which can be covalently attached to target proteins and subsequently leads to their degradation by the 26S proteasome, in a NUB1-dependent manner. Conjugation to the target protein is activated by UBA6 via adenylation of its C-terminal glycine. Probably functions as a survival factor. Promotes the expression of the proteasome subunit beta type-9 (PSMB9/LMP2). Regulates TNF-alpha-induced and LPS-mediated activation of the central mediator of innate immunity NF-kappa-B by promoting TNF-alpha-mediated proteasomal degradation of ubiquitinated-I-kappa-B-alpha. Required for TNF-alpha-induced p65 nuclear translocation in renal tubular epithelial cells (RTECs). May be involved in dendritic cell (DC) maturation, the process by which immature dendritic cells differentiate into fully competent antigen-presenting cells that initiate T-cell responses. Mediates mitotic non-disjunction and chromosome instability, in long-term in vitro culture and cancers, by abbreviating mitotic phase and impairing the kinetochore localization of MAD2L1 during the prometaphase stage of the cell cycle. May be involved in the formation of aggresomes when proteasome is saturated or impaired. Mediates apoptosis in a caspase-dependent manner, especially in renal epithelium and tubular cells during renal diseases. The sequence is that of Ubiquitin D (Ubd) from Rattus norvegicus (Rat).